The primary structure comprises 122 residues: Small ribosomal subunit protein uS13 (122 aa).

The disordered stretch occupies residues 99-122 (RGQRTHTNARTRKGPAKAIAGKKK).

This sequence belongs to the universal ribosomal protein uS13 family. As to quaternary structure, part of the 30S ribosomal subunit. Forms a loose heterodimer with protein S19. Forms two bridges to the 50S subunit in the 70S ribosome.

In terms of biological role, located at the top of the head of the 30S subunit, it contacts several helices of the 16S rRNA. In the 70S ribosome it contacts the 23S rRNA (bridge B1a) and protein L5 of the 50S subunit (bridge B1b), connecting the 2 subunits; these bridges are implicated in subunit movement. Contacts the tRNAs in the A and P-sites. The polypeptide is Small ribosomal subunit protein uS13 (Bradyrhizobium sp. (strain BTAi1 / ATCC BAA-1182)).